The chain runs to 317 residues: Type II methyltransferase M.MgeORF184P (317 aa).

Belongs to the N(4)/N(6)-methyltransferase family.

The catalysed reaction is a 2'-deoxyadenosine in DNA + S-adenosyl-L-methionine = an N(6)-methyl-2'-deoxyadenosine in DNA + S-adenosyl-L-homocysteine + H(+). Functionally, probably recognizes the double-stranded sequence 5'-CTAT-3' and methylates A-3 on only one strand; as the bacterial DNA is methylated on this sequence and this is the only type II methylase in the genome, it is probably responsible for all of the methylation on this site in the genome. This chain is Type II methyltransferase M.MgeORF184P, found in Mycoplasma genitalium (strain ATCC 33530 / DSM 19775 / NCTC 10195 / G37) (Mycoplasmoides genitalium).